A 282-amino-acid polypeptide reads, in one-letter code: HTH-type transcriptional activator RhaR (282 aa).

The HTH araC/xylS-type domain occupies Asp-179–Leu-277. DNA-binding regions (H-T-H motif) lie at residues Asp-196–Thr-217 and Ile-244–Thr-267.

As to quaternary structure, binds DNA as a dimer.

The protein localises to the cytoplasm. Functionally, activates expression of the rhaSR operon in response to L-rhamnose. In Shigella dysenteriae serotype 1 (strain Sd197), this protein is HTH-type transcriptional activator RhaR.